Consider the following 260-residue polypeptide: Ribosomal RNA small subunit methyltransferase G (260 aa).

S-adenosyl-L-methionine contacts are provided by residues Gly94, Phe99, 117–119 (DSS), 145–146 (AE), and Arg164.

This sequence belongs to the methyltransferase superfamily. RNA methyltransferase RsmG family.

It is found in the cytoplasm. In terms of biological role, specifically methylates the N7 position of a guanine in 16S rRNA. In Synechococcus sp. (strain JA-3-3Ab) (Cyanobacteria bacterium Yellowstone A-Prime), this protein is Ribosomal RNA small subunit methyltransferase G.